The chain runs to 360 residues: MIIWLAELLQPYLSFFRLFEYLSFRAILSVLTALGLSLWMGPIMIKRLQMLQIGQVVRNEGPESHFSKRGTPTMGGIMILAAISITILLWTDLSNPYVWAVLTVLLGYGAVGFVDDYRKVVRKNTDGLIARWKYFWQSLIAFVVAFALYAYGKDTAATQLVVPFFKDVMPQLGLMYIILTYFVIVGTSNAVNLTDGLDGLAIMPTVLVAAGFAVIAWATGNVNFSEYLHIPYLPHASELVVVCTAIVGAGLGFLWFNTYPAQVFMGDVGSLALGGALGTIAVLVRQELVLVIMGGVFVMETLSVILQVGSYKLRGQRIFRMAPIHHHYELKGWPEPRVIVRFWIISMVLVLIGLATLKVR.

10 helical membrane-spanning segments follow: residues 26 to 46 (AILS…IMIK), 70 to 90 (GTPT…ILLW), 94 to 114 (SNPY…VGFV), 132 to 152 (WKYF…YAYG), 168 to 188 (VMPQ…VGTS), 199 to 219 (GLAI…AWAT), 236 to 256 (ASEL…FLWF), 263 to 283 (VFMG…IAVL), 288 to 308 (LVLV…ILQV), and 338 to 358 (VIVR…ATLK).

The protein belongs to the glycosyltransferase 4 family. MraY subfamily. Requires Mg(2+) as cofactor.

It localises to the cell inner membrane. The catalysed reaction is UDP-N-acetyl-alpha-D-muramoyl-L-alanyl-gamma-D-glutamyl-meso-2,6-diaminopimeloyl-D-alanyl-D-alanine + di-trans,octa-cis-undecaprenyl phosphate = di-trans,octa-cis-undecaprenyl diphospho-N-acetyl-alpha-D-muramoyl-L-alanyl-D-glutamyl-meso-2,6-diaminopimeloyl-D-alanyl-D-alanine + UMP. The protein operates within cell wall biogenesis; peptidoglycan biosynthesis. Functionally, catalyzes the initial step of the lipid cycle reactions in the biosynthesis of the cell wall peptidoglycan: transfers peptidoglycan precursor phospho-MurNAc-pentapeptide from UDP-MurNAc-pentapeptide onto the lipid carrier undecaprenyl phosphate, yielding undecaprenyl-pyrophosphoryl-MurNAc-pentapeptide, known as lipid I. This chain is Phospho-N-acetylmuramoyl-pentapeptide-transferase, found in Vibrio parahaemolyticus serotype O3:K6 (strain RIMD 2210633).